The following is a 178-amino-acid chain: Large ribosomal subunit protein uL6 (178 aa).

This sequence belongs to the universal ribosomal protein uL6 family. Part of the 50S ribosomal subunit.

Its function is as follows. This protein binds to the 23S rRNA, and is important in its secondary structure. It is located near the subunit interface in the base of the L7/L12 stalk, and near the tRNA binding site of the peptidyltransferase center. The chain is Large ribosomal subunit protein uL6 from Kocuria rhizophila (strain ATCC 9341 / DSM 348 / NBRC 103217 / DC2201).